We begin with the raw amino-acid sequence, 446 residues long: Glutamate--tRNA ligase (446 aa).

A 'HIGH' region motif is present at residues proline 9–asparagine 19. Residues glycine 240 to arginine 244 carry the 'KMSKS' region motif. Residue lysine 243 coordinates ATP.

Belongs to the class-I aminoacyl-tRNA synthetase family. Glutamate--tRNA ligase type 1 subfamily. As to quaternary structure, monomer.

It is found in the cytoplasm. The enzyme catalyses tRNA(Glu) + L-glutamate + ATP = L-glutamyl-tRNA(Glu) + AMP + diphosphate. In terms of biological role, catalyzes the attachment of glutamate to tRNA(Glu) in a two-step reaction: glutamate is first activated by ATP to form Glu-AMP and then transferred to the acceptor end of tRNA(Glu). This Azospirillum brasilense protein is Glutamate--tRNA ligase.